A 579-amino-acid polypeptide reads, in one-letter code: A-type ATP synthase subunit A (579 aa).

Position 229–236 (229–236 (GPFGSGKT)) interacts with ATP.

Belongs to the ATPase alpha/beta chains family. As to quaternary structure, has multiple subunits with at least A(3), B(3), C, D, E, F, H, I and proteolipid K(x).

The protein resides in the cell membrane. The catalysed reaction is ATP + H2O + 4 H(+)(in) = ADP + phosphate + 5 H(+)(out). Functionally, component of the A-type ATP synthase that produces ATP from ADP in the presence of a proton gradient across the membrane. The A chain is the catalytic subunit. The chain is A-type ATP synthase subunit A from Methanocella arvoryzae (strain DSM 22066 / NBRC 105507 / MRE50).